The following is a 712-amino-acid chain: Polyribonucleotide nucleotidyltransferase (712 aa).

Mg(2+)-binding residues include Asp488 and Asp494. The KH domain maps to 555–614 (PKIETINIPTDKIREVIGSGGKVIREIVATTGAKVDINDDGVVKVSASDGAKIKAAIDWI). An S1 motif domain is found at 624–692 (GKIYDGKVVK…DRGKTKLSMK (69 aa)).

This sequence belongs to the polyribonucleotide nucleotidyltransferase family. The cofactor is Mg(2+).

The protein localises to the cytoplasm. The enzyme catalyses RNA(n+1) + phosphate = RNA(n) + a ribonucleoside 5'-diphosphate. Its function is as follows. Involved in mRNA degradation. Catalyzes the phosphorolysis of single-stranded polyribonucleotides processively in the 3'- to 5'-direction. The chain is Polyribonucleotide nucleotidyltransferase from Caulobacter vibrioides (strain NA1000 / CB15N) (Caulobacter crescentus).